We begin with the raw amino-acid sequence, 220 residues long: Charged multivesicular body protein 5 (220 aa).

Over residues M1–P10 the composition is skewed to basic residues. The tract at residues M1–R27 is disordered. 2 coiled-coil regions span residues D25 to G55 and K121 to Y153. A disordered region spans residues D178–G206.

Belongs to the SNF7 family. In terms of assembly, probable peripherally associated component of the endosomal sorting required for transport complex III (ESCRT-III).

The protein localises to the cytoplasm. The protein resides in the cytosol. It is found in the endosome membrane. Its function is as follows. Probable peripherally associated component of the endosomal sorting required for transport complex III (ESCRT-III) which is involved in multivesicular bodies (MVBs) formation and sorting of endosomal cargo proteins into MVBs. MVBs contain intraluminal vesicles (ILVs) that are generated by invagination and scission from the limiting membrane of the endosome and mostly are delivered to lysosomes enabling degradation of membrane proteins, such as stimulated growth factor receptors, lysosomal enzymes and lipids. The chain is Charged multivesicular body protein 5 (chmp5) from Danio rerio (Zebrafish).